A 184-amino-acid polypeptide reads, in one-letter code: Threonylcarbamoyl-AMP synthase (184 aa).

Residues 3–184 form the YrdC-like domain; that stretch reads AWFIQKAVSV…DAATGAILRQ (182 aa).

The protein belongs to the SUA5 family. TsaC subfamily.

It is found in the cytoplasm. The catalysed reaction is L-threonine + hydrogencarbonate + ATP = L-threonylcarbamoyladenylate + diphosphate + H2O. Functionally, required for the formation of a threonylcarbamoyl group on adenosine at position 37 (t(6)A37) in tRNAs that read codons beginning with adenine. Catalyzes the conversion of L-threonine, HCO(3)(-)/CO(2) and ATP to give threonylcarbamoyl-AMP (TC-AMP) as the acyladenylate intermediate, with the release of diphosphate. The chain is Threonylcarbamoyl-AMP synthase from Hahella chejuensis (strain KCTC 2396).